We begin with the raw amino-acid sequence, 147 residues long: Ribonuclease H (147 aa).

Residues Met1–Ala142 enclose the RNase H type-1 domain. Mg(2+) is bound by residues Asp9, Glu47, Asp69, and Asp134.

It belongs to the RNase H family. Monomer. The cofactor is Mg(2+).

The protein resides in the cytoplasm. It carries out the reaction Endonucleolytic cleavage to 5'-phosphomonoester.. In terms of biological role, endonuclease that specifically degrades the RNA of RNA-DNA hybrids. This chain is Ribonuclease H, found in Symbiobacterium thermophilum (strain DSM 24528 / JCM 14929 / IAM 14863 / T).